The following is a 400-amino-acid chain: tRNA-specific 2-thiouridylase MnmA (400 aa).

Residues 19-26 and Leu-45 each bind ATP; that span reads AMSGGVDS. The Nucleophile role is filled by Cys-113. A disulfide bridge connects residues Cys-113 and Cys-210. Gly-137 provides a ligand contact to ATP. An interaction with tRNA region spans residues 160–162; that stretch reads RDQ. Catalysis depends on Cys-210, which acts as the Cysteine persulfide intermediate.

This sequence belongs to the MnmA/TRMU family.

Its subcellular location is the cytoplasm. It carries out the reaction S-sulfanyl-L-cysteinyl-[protein] + uridine(34) in tRNA + AH2 + ATP = 2-thiouridine(34) in tRNA + L-cysteinyl-[protein] + A + AMP + diphosphate + H(+). Catalyzes the 2-thiolation of uridine at the wobble position (U34) of tRNA, leading to the formation of s(2)U34. This chain is tRNA-specific 2-thiouridylase MnmA, found in Nitrobacter winogradskyi (strain ATCC 25391 / DSM 10237 / CIP 104748 / NCIMB 11846 / Nb-255).